We begin with the raw amino-acid sequence, 391 residues long: Probable sugar efflux transporter (391 aa).

12 consecutive transmembrane segments (helical) span residues 16 to 36, 51 to 71, 82 to 102, 110 to 130, 138 to 158, 170 to 190, 210 to 230, 247 to 267, 277 to 297, 300 to 320, 338 to 358, and 361 to 381; these read VFVFSLSAFIFNTTEFVPVAL, VGLMITAYAWVVSLGSLPLML, LLFLFALFIFSHILSALAWNF, MGIAFAHSIFWSITASLVIRV, QALGLLALGSSLAMILGLPLG, TFGVIGGVATLIMLLMWKLLP, PLLVGIYLLVIMVISGHFTTY, ITTLMLFVFGLAGVVGSFLFG, FIAFAMVLVICPQLLLFVFKN, WVIFLQIFLWGIGITSLTIAL, IFSGSYNVGIGSGALFGSIVI, and LGLEYIGFVGGALGLLALFWL.

It belongs to the major facilitator superfamily. SotB (TC 2.A.1.2) family.

The protein resides in the cell inner membrane. Functionally, involved in the efflux of sugars. The physiological role may be the reduction of the intracellular concentration of toxic sugars or sugar metabolites. The protein is Probable sugar efflux transporter of Helicobacter pylori (strain J99 / ATCC 700824) (Campylobacter pylori J99).